We begin with the raw amino-acid sequence, 600 residues long: Elongation factor 4 (600 aa).

The region spanning 5–187 is the tr-type G domain; it reads KYIRNFSIIA…AIINKLPAPK (183 aa). GTP contacts are provided by residues 17–22 and 134–137; these read DHGKST and NKID.

This sequence belongs to the TRAFAC class translation factor GTPase superfamily. Classic translation factor GTPase family. LepA subfamily.

Its subcellular location is the cell inner membrane. The catalysed reaction is GTP + H2O = GDP + phosphate + H(+). Its function is as follows. Required for accurate and efficient protein synthesis under certain stress conditions. May act as a fidelity factor of the translation reaction, by catalyzing a one-codon backward translocation of tRNAs on improperly translocated ribosomes. Back-translocation proceeds from a post-translocation (POST) complex to a pre-translocation (PRE) complex, thus giving elongation factor G a second chance to translocate the tRNAs correctly. Binds to ribosomes in a GTP-dependent manner. The protein is Elongation factor 4 of Rickettsia prowazekii (strain Madrid E).